Here is a 355-residue protein sequence, read N- to C-terminus: Protein RecA (355 aa).

67 to 74 is an ATP binding site; it reads GPESSGKT.

The protein belongs to the RecA family.

The protein resides in the cytoplasm. Can catalyze the hydrolysis of ATP in the presence of single-stranded DNA, the ATP-dependent uptake of single-stranded DNA by duplex DNA, and the ATP-dependent hybridization of homologous single-stranded DNAs. It interacts with LexA causing its activation and leading to its autocatalytic cleavage. The sequence is that of Protein RecA from Shewanella amazonensis (strain ATCC BAA-1098 / SB2B).